We begin with the raw amino-acid sequence, 324 residues long: tRNA N6-adenosine threonylcarbamoyltransferase (324 aa).

Positions 107, 111, and 127 each coordinate Fe cation. Substrate contacts are provided by residues 127–131 (YVSGG), Asp159, Gly172, Glu176, and Asn257. Residue Asp285 coordinates Fe cation.

This sequence belongs to the KAE1 / TsaD family. In terms of assembly, monomer. Component of the KEOPS complex that consists of Kae1, Bud32, Cgi121 and Pcc1; the whole complex dimerizes. Fe(2+) serves as cofactor.

The protein resides in the cytoplasm. The catalysed reaction is L-threonylcarbamoyladenylate + adenosine(37) in tRNA = N(6)-L-threonylcarbamoyladenosine(37) in tRNA + AMP + H(+). Its function is as follows. Required for the formation of a threonylcarbamoyl group on adenosine at position 37 (t(6)A37) in tRNAs that read codons beginning with adenine. Is a component of the KEOPS complex that is probably involved in the transfer of the threonylcarbamoyl moiety of threonylcarbamoyl-AMP (TC-AMP) to the N6 group of A37. Kae1 likely plays a direct catalytic role in this reaction, but requires other protein(s) of the complex to fulfill this activity. In Pyrococcus horikoshii (strain ATCC 700860 / DSM 12428 / JCM 9974 / NBRC 100139 / OT-3), this protein is tRNA N6-adenosine threonylcarbamoyltransferase.